The primary structure comprises 453 residues: F-box protein SKIP14 (453 aa).

An F-box; degenerate domain is found at 34–104 (RKNTGGDASS…NRQQLFAGLS (71 aa)).

In terms of assembly, part of a SCF (ASK-cullin-F-box) protein ligase complex. Interacts with CUL1, SKP1A/ASK1 and SPK1B/ASK2.

Its pathway is protein modification; protein ubiquitination. In terms of biological role, component of SCF(ASK-cullin-F-box) E3 ubiquitin ligase complexes, which may mediate the ubiquitination and subsequent proteasomal degradation of target proteins. The sequence is that of F-box protein SKIP14 (SKIP14) from Arabidopsis thaliana (Mouse-ear cress).